A 132-amino-acid chain; its full sequence is Protein MrkF (132 aa).

It is found in the fimbrium. Appears to affect the stability of the intact fimbriae on the cell surface. The sequence is that of Protein MrkF (mrkF) from Klebsiella pneumoniae.